The following is a 382-amino-acid chain: Mannitol-1-phosphate 5-dehydrogenase (382 aa).

Residue 3–14 (ALHFGAGNIGRG) coordinates NAD(+).

The protein belongs to the mannitol dehydrogenase family.

It carries out the reaction D-mannitol 1-phosphate + NAD(+) = beta-D-fructose 6-phosphate + NADH + H(+). This is Mannitol-1-phosphate 5-dehydrogenase from Salmonella dublin (strain CT_02021853).